We begin with the raw amino-acid sequence, 181 residues long: Large ribosomal subunit protein uL22 (181 aa).

Residues 157 to 181 (PEAAKKPGKKTSAVEKSKKATAATH) are disordered.

This sequence belongs to the universal ribosomal protein uL22 family.

The protein is Large ribosomal subunit protein uL22 (RpL17) of Biphyllus lunatus (Beetle).